Reading from the N-terminus, the 158-residue chain is Transcriptional repressor NrdR (158 aa).

A zinc finger spans residues 3-34 (CPYCGYPDSKVIDSRPTDDNTSIRRRRECLKC). Positions 49–139 (ILVIKKDNRR…VYRQFKDINT (91 aa)) constitute an ATP-cone domain.

Belongs to the NrdR family. Requires Zn(2+) as cofactor.

Negatively regulates transcription of bacterial ribonucleotide reductase nrd genes and operons by binding to NrdR-boxes. This is Transcriptional repressor NrdR from Thermoanaerobacter sp. (strain X514).